Consider the following 238-residue polypeptide: Orotidine 5'-phosphate decarboxylase (238 aa).

Residues Asp10, Lys32, 59 to 68 (DLKLHDIPNT), Thr122, Arg184, Gln193, Gly213, and Arg214 each bind substrate. The Proton donor role is filled by Lys61.

This sequence belongs to the OMP decarboxylase family. Type 1 subfamily. In terms of assembly, homodimer.

It carries out the reaction orotidine 5'-phosphate + H(+) = UMP + CO2. Its pathway is pyrimidine metabolism; UMP biosynthesis via de novo pathway; UMP from orotate: step 2/2. Its function is as follows. Catalyzes the decarboxylation of orotidine 5'-monophosphate (OMP) to uridine 5'-monophosphate (UMP). In Bacillus mycoides (strain KBAB4) (Bacillus weihenstephanensis), this protein is Orotidine 5'-phosphate decarboxylase.